Consider the following 534-residue polypeptide: MQVAPNVWSKYFNIPNPGLRAYFSNVVSGQPEVYRTPFYKGMSLESICDEWYKKLVSIDTQWPTLMEFEDDLRKKVGPMSVMLPLKERMSDIDSYYDSISKDQVPFDTKAISAAKSEWKGVSRLRLRSEVNTVAVMKKSTNSGSPYFSKRKAVVSKTIPCDVYMDGRYCVMRQNGREWSGAAVLGWRGQEGGPKPTDVKQRVVWMFPFAVNIRELQVYQPLILTFQRLGLVPAWVSMEAVDRRITKMFDTKGPRDVVVCTDFSKFDQHFNPTCQSVAKELLADLLTGQEAVDWLERVFPIKYAIPLAYNWGEIRYGIHGMGSGSGGTNADETLVHRVLQHEAAISHHTTLNPNSQCLGDDGVLTYPGISAEDVMQSYSRHGLDMNLEKQYVSKQDCTYLRRWHHTDYRVDGMCVGVYSTMRALGRLAMQERYYDPDVWGEKMVTLRYLSIIENVKYHPLKEEFLDFCIKGDKTRLGLGIPGFLDNIAGEAQKAIDMMPDFLGYTKSLQYDGDLRRNAAAGIENWWVVQALKSRR.

The 119-residue stretch at 255–373 folds into the RdRp catalytic domain; the sequence is DVVVCTDFSK…TYPGISAEDV (119 aa).

The protein resides in the virion. It catalyses the reaction RNA(n) + a ribonucleoside 5'-triphosphate = RNA(n+1) + diphosphate. Functionally, RNA-directed RNA polymerase that is involved in both transcription and genome replication. This chain is Potential RNA-dependent RNA polymerase (Segment-2), found in Human picobirnavirus (strain Human/Thailand/Hy005102/-) (PBV).